Here is a 179-residue protein sequence, read N- to C-terminus: Tetratricopeptide repeat protein 36 (179 aa).

3 TPR repeats span residues 43 to 76 (SLQL…CPKN), 78 to 110 (SAYN…AGPK), and 115 to 148 (CQAY…GSSF).

This sequence belongs to the TTC36 family.

The protein is Tetratricopeptide repeat protein 36 of Caenorhabditis elegans.